The chain runs to 501 residues: Endosomal/lysosomal proton channel TMEM175 (501 aa).

The tract at residues 1 to 20 is disordered; it reads MAAPRAATPGPGGGARKPEL. The Cytoplasmic segment spans residues 1–31; sequence MAAPRAATPGPGGGARKPELDLELGSSTQTS. The helical transmembrane segment at 32-54 threads the bilayer; it reads HRLLAYSDALLSIIATVMILPVA. The short motif at 33 to 39 is the RxxxFSD motif 1 element; sequence RLLAYSD. Topologically, residues 55–75 are lumenal; sequence HTKIHPDQKLGESVQQLLLTK. Residues 56 to 61 are short helix H1-1; that stretch reads TKIHPD. Residues 63-69 form a short helix H2-1 region; it reads KLGESVQ. A helical transmembrane segment spans residues 76–98; that stretch reads IAVYLMTFLIVTVAWAAHVRLFQ. Residues 99–104 lie on the Cytoplasmic side of the membrane; it reads VIELID. The helical transmembrane segment at 105-126 threads the bilayer; it reads DVLALLNLACMMIITFLPYTFS. The Lumenal segment spans residues 127-136; sequence LMASFPGVPF. A helical membrane pass occupies residues 137-158; sequence GIFLFSVCAVVIGLIQAVIVVY. At 159–182 the chain is on the cytoplasmic side; the sequence is GFYHPHLLNQQIQVSENQNFYKRH. Residues 183 to 203 traverse the membrane as a helical segment; it reads ILKIILRGPALCFLAAIFSFF. The Lumenal segment spans residues 204–208; the sequence is FIPLS. The chain crosses the membrane as a helical span at residues 209-228; it reads YLLLGLVIVFPHLSRFITWC. Residues 229-257 lie on the Cytoplasmic side of the membrane; it reads KTKIVGHRDEEEASYSLETFSFYLSEPLS. Residues 258–282 traverse the membrane as a helical segment; the sequence is KERVEAFSDGVYAIVATLLILDICE. A RxxxFSD motif 2 motif is present at residues 260 to 266; sequence RVEAFSD. Residues 283 to 309 are Lumenal-facing; it reads DNVPDPREVGEKFHGSLLEALSEYGPN. Positions 288-296 are short helix H1-2; the sequence is PREVGEKFH. The segment at 298–304 is short helix H2-2; it reads SLLEALS. A helical membrane pass occupies residues 310-332; it reads YLAYFGSFVTIGLLWFVHHSLFL. Residues 333-338 lie on the Cytoplasmic side of the membrane; the sequence is YVTKAT. Residues 339-360 traverse the membrane as a helical segment; that stretch reads RLMGLLNILSLAFIGGLPLAYQ. Residues 361-375 lie on the Lumenal side of the membrane; it reads LTSEFAEKSHNEIEA. A helical membrane pass occupies residues 376-396; that stretch reads IQVSCVITFFASIFQFAIWTT. Residues 397 to 416 are Cytoplasmic-facing; sequence ALLHERETLHPFARYGGKEH. Residues 417–440 traverse the membrane as a helical segment; sequence AFMFAKLALYPCVSLGAFFLTCLL. Residues 441-442 lie on the Lumenal side of the membrane; that stretch reads SE. A helical transmembrane segment spans residues 443-469; sequence FSTEIFHLMQIVIPFAFLALRIFVRIS. Residues 470–501 are Cytoplasmic-facing; that stretch reads LTVIKSVMSLSRRKVVLLEEEEACLSPTETHS.

It belongs to the TMEM175 family. In terms of assembly, homodimer.

It localises to the endosome membrane. The protein resides in the lysosome membrane. It carries out the reaction H(+)(in) = H(+)(out). The catalysed reaction is K(+)(in) = K(+)(out). With respect to regulation, active at low pH (under pH 4.6): proton channel activity is activated by luminal side protons. Polyunsaturated fatty acids, such as arachidonic acid, also activate the channel activity. Proton-activated proton channel that catalyzes proton efflux from endosomes and lysosomes to maintain a steady-state pH. Activated at low pH (under pH 4.6) by luminal side protons: selectively mediates lysosomal proton release from lysosomes, eliciting a proton leak that balances V-ATPase activity to maintain pH homeostasis. Regulation of lumenal pH stability is required for autophagosome-lysosome fusion. Also acts as a potassium channel at higher pH, regulating potassium conductance in endosomes and lysosomes. The polypeptide is Endosomal/lysosomal proton channel TMEM175 (Gallus gallus (Chicken)).